The following is a 76-amino-acid chain: Defensin-like protein 163 (76 aa).

An N-terminal signal peptide occupies residues 1–27; it reads MAKLIYSYLFISMFVLSVLLALPNAEG. Disulfide bonds link Cys-33/Cys-76, Cys-43/Cys-62, Cys-48/Cys-70, and Cys-52/Cys-72.

Belongs to the DEFL family.

It is found in the secreted. The polypeptide is Defensin-like protein 163 (LCR24) (Arabidopsis thaliana (Mouse-ear cress)).